The chain runs to 551 residues: Glucose-6-phosphate isomerase (551 aa).

The active-site Proton donor is glutamate 349. Residues histidine 378 and lysine 480 contribute to the active site.

It belongs to the GPI family.

It localises to the cytoplasm. The catalysed reaction is alpha-D-glucose 6-phosphate = beta-D-fructose 6-phosphate. It participates in carbohydrate biosynthesis; gluconeogenesis. It functions in the pathway carbohydrate degradation; glycolysis; D-glyceraldehyde 3-phosphate and glycerone phosphate from D-glucose: step 2/4. Catalyzes the reversible isomerization of glucose-6-phosphate to fructose-6-phosphate. This chain is Glucose-6-phosphate isomerase, found in Prochlorococcus marinus (strain MIT 9313).